A 316-amino-acid polypeptide reads, in one-letter code: tRNA uridine(34) hydroxylase (316 aa).

Residues 123-217 enclose the Rhodanese domain; the sequence is LSDDTVVIDA…YGKDPETKGE (95 aa). The active-site Cysteine persulfide intermediate is C177.

This sequence belongs to the TrhO family.

It catalyses the reaction uridine(34) in tRNA + AH2 + O2 = 5-hydroxyuridine(34) in tRNA + A + H2O. Functionally, catalyzes oxygen-dependent 5-hydroxyuridine (ho5U) modification at position 34 in tRNAs. The protein is tRNA uridine(34) hydroxylase of Staphylococcus saprophyticus subsp. saprophyticus (strain ATCC 15305 / DSM 20229 / NCIMB 8711 / NCTC 7292 / S-41).